Here is a 431-residue protein sequence, read N- to C-terminus: tRNA-2-methylthio-N(6)-dimethylallyladenosine synthase (431 aa).

Residues arginine 4 to serine 120 enclose the MTTase N-terminal domain. [4Fe-4S] cluster-binding residues include cysteine 13, cysteine 49, cysteine 83, cysteine 154, cysteine 158, and cysteine 161. In terms of domain architecture, Radical SAM core spans arginine 140–arginine 367. One can recognise a TRAM domain in the interval lysine 370 to serine 430.

Belongs to the methylthiotransferase family. MiaB subfamily. As to quaternary structure, monomer. [4Fe-4S] cluster is required as a cofactor.

It is found in the cytoplasm. It carries out the reaction N(6)-dimethylallyladenosine(37) in tRNA + (sulfur carrier)-SH + AH2 + 2 S-adenosyl-L-methionine = 2-methylsulfanyl-N(6)-dimethylallyladenosine(37) in tRNA + (sulfur carrier)-H + 5'-deoxyadenosine + L-methionine + A + S-adenosyl-L-homocysteine + 2 H(+). Its function is as follows. Catalyzes the methylthiolation of N6-(dimethylallyl)adenosine (i(6)A), leading to the formation of 2-methylthio-N6-(dimethylallyl)adenosine (ms(2)i(6)A) at position 37 in tRNAs that read codons beginning with uridine. This Thermodesulfovibrio yellowstonii (strain ATCC 51303 / DSM 11347 / YP87) protein is tRNA-2-methylthio-N(6)-dimethylallyladenosine synthase.